The following is a 123-amino-acid chain: uncharacterized protein (123 aa).

Residues V36–A76 are a coiled coil.

This is an uncharacterized protein from Aquifex aeolicus (strain VF5).